A 75-amino-acid polypeptide reads, in one-letter code: CLAVATA3/ESR (CLE)-related protein 33 (75 aa).

The N-terminal stretch at 1 to 22 (MASWRMLCFVLLFTSILICHDA) is a signal peptide. A hydroxyproline mark is found at P67 and P70. Residue P70 is glycosylated (O-linked (Ara...) hydroxyproline).

Belongs to the CLV3/ESR signal peptide family. Post-translationally, the O-glycosylation (arabinosylation) of the hydroxyproline Pro-70 enhances binding affinity of the CLE33p peptide for its receptor. In terms of tissue distribution, expressed in root vasculature.

The protein localises to the secreted. The protein resides in the extracellular space. In terms of biological role, signaling peptide involved in the regulation of root colonization by arbuscular mycorrhizal (AM) fungi. Moves from root to shoot to function with the receptor kinase SUNN, in a signaling pathway that repress strigolactone biosynthetic genes and strigolactone content in the roots, and consequently reduces the promotion of further colonization by AM fungi. This Medicago truncatula (Barrel medic) protein is CLAVATA3/ESR (CLE)-related protein 33.